Reading from the N-terminus, the 914-residue chain is Eukaryotic initiation factor 4F subunit p130 (914 aa).

Residues Met-1–Pro-12 are compositionally biased toward pro residues. Disordered regions lie at residues Met-1–Arg-84, Pro-128–Val-205, Glu-240–Ser-351, and Ile-457–Ser-535. Residues Asn-26–Leu-44 are compositionally biased toward polar residues. The segment covering Lys-59–Asn-73 has biased composition (low complexity). Ser-74 carries the post-translational modification Phosphoserine. A compositionally biased stretch (low complexity) spans Pro-145–Lys-155. Basic and acidic residues predominate over residues Thr-156–Ala-195. Thr-196 bears the Phosphothreonine mark. An interaction with PAB1 region spans residues Ala-201–Phe-315. A compositionally biased stretch (basic and acidic residues) spans Glu-240–Asp-263. 2 stretches are compositionally biased toward polar residues: residues Ser-298–Gln-325 and Ile-339–Val-348. Residue Thr-301 is modified to Phosphothreonine. Over residues Arg-496–Ile-529 the composition is skewed to basic and acidic residues. Ser-503 is modified (phosphoserine). Residues Glu-567 to Lys-810 enclose the MIF4G domain. The interval Gln-833 to Asp-914 is disordered. Residues Gln-841 to Asn-867 show a composition bias toward low complexity. Residues Thr-868–Arg-886 are compositionally biased toward polar residues. Residue Ser-913 is modified to Phosphoserine.

This sequence belongs to the eukaryotic initiation factor 4G family. Component of the eIF4F complex, which composition varies with external and internal environmental conditions. It is composed of at least eIF4A (TIF1/TIF2), eIF4E (TIF45) and eIF4G (TIF4631 or TIF4632). Interacts with PAT1 in a RNA-dependent manner.

The protein localises to the cytoplasm. Component of the eIF4F complex, which interacts with the mRNA cap structure and serves as an initial point of assembly for the translation apparatus. Stimulates translation by interaction with polyadenylate-binding protein PAB1, bringing the 5'- and 3'-ends of the mRNA in proximity. The formation of this circular mRNP structure appears to be critical for the synergistic effects of the cap and the poly(A) tail in facilitating translation initiation, recycling of ribosomes, and mRNA stability. TIF4632 is probably essential when TIF4631 is missing. This is Eukaryotic initiation factor 4F subunit p130 from Saccharomyces cerevisiae (strain ATCC 204508 / S288c) (Baker's yeast).